The following is a 306-amino-acid chain: SPbeta prophage-derived uncharacterized protein YonG (306 aa).

The chain is SPbeta prophage-derived uncharacterized protein YonG (yonG) from Bacillus subtilis (strain 168).